Consider the following 320-residue polypeptide: 4-hydroxy-3-methylbut-2-enyl diphosphate reductase (320 aa).

Cysteine 13 serves as a coordination point for [4Fe-4S] cluster. (2E)-4-hydroxy-3-methylbut-2-enyl diphosphate-binding residues include histidine 41 and histidine 75. Dimethylallyl diphosphate contacts are provided by histidine 41 and histidine 75. Isopentenyl diphosphate-binding residues include histidine 41 and histidine 75. Cysteine 97 is a binding site for [4Fe-4S] cluster. Histidine 125 contacts (2E)-4-hydroxy-3-methylbut-2-enyl diphosphate. Histidine 125 provides a ligand contact to dimethylallyl diphosphate. Residue histidine 125 participates in isopentenyl diphosphate binding. Glutamate 127 acts as the Proton donor in catalysis. Threonine 168 contacts (2E)-4-hydroxy-3-methylbut-2-enyl diphosphate. Cysteine 225 is a [4Fe-4S] cluster binding site. Serine 253, serine 254, asparagine 255, and serine 302 together coordinate (2E)-4-hydroxy-3-methylbut-2-enyl diphosphate. Residues serine 253, serine 254, asparagine 255, and serine 302 each coordinate dimethylallyl diphosphate. Residues serine 253, serine 254, asparagine 255, and serine 302 each coordinate isopentenyl diphosphate.

It belongs to the IspH family. [4Fe-4S] cluster is required as a cofactor.

It carries out the reaction isopentenyl diphosphate + 2 oxidized [2Fe-2S]-[ferredoxin] + H2O = (2E)-4-hydroxy-3-methylbut-2-enyl diphosphate + 2 reduced [2Fe-2S]-[ferredoxin] + 2 H(+). The catalysed reaction is dimethylallyl diphosphate + 2 oxidized [2Fe-2S]-[ferredoxin] + H2O = (2E)-4-hydroxy-3-methylbut-2-enyl diphosphate + 2 reduced [2Fe-2S]-[ferredoxin] + 2 H(+). The protein operates within isoprenoid biosynthesis; dimethylallyl diphosphate biosynthesis; dimethylallyl diphosphate from (2E)-4-hydroxy-3-methylbutenyl diphosphate: step 1/1. Its pathway is isoprenoid biosynthesis; isopentenyl diphosphate biosynthesis via DXP pathway; isopentenyl diphosphate from 1-deoxy-D-xylulose 5-phosphate: step 6/6. In terms of biological role, catalyzes the conversion of 1-hydroxy-2-methyl-2-(E)-butenyl 4-diphosphate (HMBPP) into a mixture of isopentenyl diphosphate (IPP) and dimethylallyl diphosphate (DMAPP). Acts in the terminal step of the DOXP/MEP pathway for isoprenoid precursor biosynthesis. In Chlorobium luteolum (strain DSM 273 / BCRC 81028 / 2530) (Pelodictyon luteolum), this protein is 4-hydroxy-3-methylbut-2-enyl diphosphate reductase.